Reading from the N-terminus, the 186-residue chain is Transposons Tn1721 resolvase (186 aa).

The region spanning 4–137 (HRIGYVRVSS…EGIALAKQRG (134 aa)) is the Resolvase/invertase-type recombinase catalytic domain. Serine 12 serves as the catalytic O-(5'-phospho-DNA)-serine intermediate. The H-T-H motif DNA-binding region spans 164-183 (KAQLAREFNISRETLYQYLR).

It belongs to the site-specific recombinase resolvase family.

Its function is as follows. Resolvase catalyzes the resolution (a site-specific recombination) of the cointegrated replicon to yield the final transposition products. The protein is Transposons Tn1721 resolvase (tnpR) of Escherichia coli.